A 409-amino-acid chain; its full sequence is uncharacterized protein (409 aa).

Transmembrane regions (helical) follow at residues 53–73 (IITL…YVHC), 83–103 (WCYF…NVDG), 115–135 (LGEL…AIVM), 141–161 (IGPY…YLAH), 183–203 (VLFM…WTYG), 205–225 (STTV…VTCL), 243–263 (CLLQ…WASV), 265–285 (NLIT…FGYI), 299–319 (CSLF…SILA), and 329–349 (TVAL…FSYF). Polar residues predominate over residues 388–401 (EEGSSSIGNSTDDI). The interval 388 to 409 (EEGSSSIGNSTDDINPSEIEEI) is disordered.

This sequence belongs to the CDP-alcohol phosphatidyltransferase class-I family.

The protein localises to the membrane. This is an uncharacterized protein from Dictyostelium discoideum (Social amoeba).